Consider the following 2527-residue polypeptide: Leucine-rich repeat serine/threonine-protein kinase 2 (2527 aa).

A required for RAB29-mediated activation region spans residues 1 to 969 (MASGACQGCE…RSSRLPSHMR (969 aa)). Positions 9–33 (CEEEEEEEALKKLIVRLNNVQEGKQ) form a coiled coil. 4 positions are modified to phosphoserine: serine 910, serine 935, serine 955, and serine 973. Residues 957-979 (ESLRSSRLPSHMRQSDSSSSLAS) form a disordered region. Residues 961–978 (SSRLPSHMRQSDSSSSLA) are compositionally biased toward low complexity. LRR repeat units follow at residues 983-1004 (HITS…SQKC), 1012-1033 (HLTK…LCET), 1036-1057 (CLIH…VLKM), 1059-1080 (RITN…DPAM), 1084-1105 (SLKQ…LAQV), 1108-1129 (KLEQ…LSLK), 1130-1150 (ELKI…DFLE), 1156-1171 (ESFS…MPAL), 1174-1196 (SITS…FSLP), 1197-1218 (HLRS…AHWK), 1221-1245 (NLRE…HVWS), 1246-1267 (RVEK…IGCL), and 1269-1291 (NLTS…MGKL). At serine 1292 the chain carries Phosphoserine; by autocatalysis. The region spanning 1328–1511 (KAVPYNRMKL…KTIINESLNF (184 aa)) is the Roc domain. 1341-1348 (GNTGSGKT) provides a ligand contact to GTP. Serine 1444 bears the Phosphoserine mark. In terms of domain architecture, COR spans 1543–1740 (TEFPVINRKH…RMYWRQGIYL (198 aa)). The region spanning 1879–2146 (EAPEFLLGDG…LICLMRHILI (268 aa)) is the Protein kinase domain. Positions 1885, 1887, 1888, 1891, 1893, 1904, 1906, 1947, 1948, 1950, 1954, and 1957 each coordinate ATP. Aspartate 1994 (proton acceptor) is an active-site residue. Histidine 1998, leucine 2001, alanine 2016, and aspartate 2017 together coordinate ATP. Position 2098–2121 (2098–2121 (EYGCAPWPMVEKLITKCLKENPQE)) interacts with GTP. WD repeat units follow at residues 2139 to 2183 (CLMR…SLFD), 2188 to 2228 (RYSY…LVIN), 2233 to 2276 (TKRH…MIFE), 2281 to 2327 (KCKG…FSFS), 2333 to 2377 (QKLI…EVWD), 2402 to 2438 (KESK…LLLD), and 2443 to 2497 (RVIR…SIWD). 2295 to 2298 (DVST) is a GTP binding site.

This sequence belongs to the protein kinase superfamily. TKL Ser/Thr protein kinase family. Homodimer. Homotetramer; when activated by GTP-bound RAB29. Interacts with PRKN, PRDX3 and TPCN2. Interacts with VPS35. Interacts (via N-terminus) with RAB29; this interaction is direct and stimulates kinase activity. Interacts (via ROC domain) with SEC16A. Interacts with APP; interaction promotes phosphorylation of 'Thr-743' of APP. Interacts with MAPT. Interacts with RAB8A, RAB10, and RAB12. Interacts (via N-terminus) with RAB32. Interacts with YWHAG; this interaction is dependent on phosphorylation of Ser-910 and either Ser-935 or Ser-1444. Interacts with SFN; this interaction is dependent on phosphorylation of Ser-910 and/or Ser-935. The cofactor is Mg(2+). Post-translationally, autophosphorylated at Ser-1292. Autophosphorylation is stimulated by RAB29. Phosphorylation of Ser-910 and Ser-935 or Ser-1444 facilitates interaction with YWHAG. Phosphorylation of Ser-910 and/or Ser-935 facilitates interaction with SFN. Ubiquitinated by TRIM1; undergoes 'Lys-48'-linked polyubiquitination leading to proteasomal degradation. In terms of tissue distribution, expressed in the brain (at protein level). Detected throughout the adult brain. Expressed in deep cerebral cortex layers, superficial cingulate cortex layers, the piriform cortex, hippocampal formation, caudate putamen, substantia nigra, the basolateral and basomedial anterior amygdala nuclei, reticular thalamic nucleus and also in the cerebellar granular cell layer. Highly expressed in the striatum, cortex and olfactory tubercle. Little or no expression in the substantia nigra, where dopaminergic neurons preferentially degenerate in Parkinson disease. Expression is particularly high in brain dopaminoceptive areas. High and strikingly specific expression in striatum and parts of cortex and no signals in dopamine neurons.

It localises to the cytoplasmic vesicle. It is found in the perikaryon. The protein resides in the cell projection. The protein localises to the axon. Its subcellular location is the dendrite. It localises to the golgi apparatus membrane. It is found in the endoplasmic reticulum membrane. The protein resides in the secretory vesicle. The protein localises to the synaptic vesicle membrane. Its subcellular location is the endosome. It localises to the lysosome. It is found in the mitochondrion outer membrane. The protein resides in the cytoplasm. The protein localises to the cytoskeleton. Its subcellular location is the phagosome. It catalyses the reaction L-threonyl-[protein] + ATP = O-phospho-L-threonyl-[protein] + ADP + H(+). The enzyme catalyses L-seryl-[protein] + ATP = O-phospho-L-seryl-[protein] + ADP + H(+). The catalysed reaction is GTP + H2O = GDP + phosphate + H(+). Its activity is regulated as follows. Kinase activity is regulated by the GTPase activity of the ROC domain. GTP-bound LRRK2 kinase activity is stimulated by RAB29. Phosphorylation of RAB10 'Thr-73' is stimulated by RAB29 and RAB32. Inhibited by small molecule inhibitors MLi-2 and LRRK2-IN-1. In terms of biological role, serine/threonine-protein kinase which phosphorylates a broad range of proteins involved in multiple processes such as neuronal plasticity, innate immunity, autophagy, and vesicle trafficking. Is a key regulator of RAB GTPases by regulating the GTP/GDP exchange and interaction partners of RABs through phosphorylation. Phosphorylates RAB3A, RAB3B, RAB3C, RAB3D, RAB8A, RAB8B, RAB10, RAB12, RAB29, RAB35, and RAB43. Regulates the RAB3IP-catalyzed GDP/GTP exchange for RAB8A through the phosphorylation of 'Thr-72' on RAB8A. Inhibits the interaction between RAB8A and GDI1 and/or GDI2 by phosphorylating 'Thr-72' on RAB8A. Regulates primary ciliogenesis through phosphorylation of RAB8A and RAB10, which promotes SHH signaling in the brain. Together with RAB29, plays a role in the retrograde trafficking pathway for recycling proteins, such as mannose-6-phosphate receptor (M6PR), between lysosomes and the Golgi apparatus in a retromer-dependent manner. Regulates neuronal process morphology in the intact central nervous system (CNS). Plays an important role in recruiting SEC16A to endoplasmic reticulum exit sites (ERES) and in regulating ER to Golgi vesicle-mediated transport and ERES organization. Positively regulates autophagy through a calcium-dependent activation of the CaMKK/AMPK signaling pathway. The process involves activation of nicotinic acid adenine dinucleotide phosphate (NAADP) receptors, increase in lysosomal pH, and calcium release from lysosomes. Phosphorylates PRDX3. By phosphorylating APP on 'Thr-743', which promotes the production and the nuclear translocation of the APP intracellular domain (AICD), regulates dopaminergic neuron apoptosis. Acts as a positive regulator of innate immunity by mediating phosphorylation of RIPK2 downstream of NOD1 and NOD2, thereby enhancing RIPK2 activation. Independent of its kinase activity, inhibits the proteasomal degradation of MAPT, thus promoting MAPT oligomerization and secretion. In addition, has GTPase activity via its Roc domain which regulates LRKK2 kinase activity. Recruited by RAB29/RAB7L1 to overloaded lysosomes where it phosphorylates and stabilizes RAB8A and RAB10 which promote lysosomal content release and suppress lysosomal enlargement through the EHBP1 and EHBP1L1 effector proteins. This Mus musculus (Mouse) protein is Leucine-rich repeat serine/threonine-protein kinase 2 (Lrrk2).